Here is a 468-residue protein sequence, read N- to C-terminus: ATP synthase subunit beta (468 aa).

156-163 is a binding site for ATP; it reads GGAGVGKT.

Belongs to the ATPase alpha/beta chains family. As to quaternary structure, F-type ATPases have 2 components, CF(1) - the catalytic core - and CF(0) - the membrane proton channel. CF(1) has five subunits: alpha(3), beta(3), gamma(1), delta(1), epsilon(1). CF(0) has three main subunits: a(1), b(2) and c(9-12). The alpha and beta chains form an alternating ring which encloses part of the gamma chain. CF(1) is attached to CF(0) by a central stalk formed by the gamma and epsilon chains, while a peripheral stalk is formed by the delta and b chains.

It localises to the cell inner membrane. The catalysed reaction is ATP + H2O + 4 H(+)(in) = ADP + phosphate + 5 H(+)(out). Functionally, produces ATP from ADP in the presence of a proton gradient across the membrane. The catalytic sites are hosted primarily by the beta subunits. The sequence is that of ATP synthase subunit beta from Sulfurimonas denitrificans (strain ATCC 33889 / DSM 1251) (Thiomicrospira denitrificans (strain ATCC 33889 / DSM 1251)).